We begin with the raw amino-acid sequence, 375 residues long: Putative glutamate--cysteine ligase 2 (375 aa).

Belongs to the glutamate--cysteine ligase type 2 family. YbdK subfamily.

It carries out the reaction L-cysteine + L-glutamate + ATP = gamma-L-glutamyl-L-cysteine + ADP + phosphate + H(+). In terms of biological role, ATP-dependent carboxylate-amine ligase which exhibits weak glutamate--cysteine ligase activity. This chain is Putative glutamate--cysteine ligase 2, found in Sorangium cellulosum (strain So ce56) (Polyangium cellulosum (strain So ce56)).